A 311-amino-acid polypeptide reads, in one-letter code: Aspartate carbamoyltransferase catalytic subunit (311 aa).

Carbamoyl phosphate-binding residues include R55 and T56. Residue K85 participates in L-aspartate binding. Positions 106, 135, and 138 each coordinate carbamoyl phosphate. L-aspartate contacts are provided by R168 and R230. The carbamoyl phosphate site is built by L268 and P269.

The protein belongs to the aspartate/ornithine carbamoyltransferase superfamily. ATCase family. As to quaternary structure, heterododecamer (2C3:3R2) of six catalytic PyrB chains organized as two trimers (C3), and six regulatory PyrI chains organized as three dimers (R2).

It catalyses the reaction carbamoyl phosphate + L-aspartate = N-carbamoyl-L-aspartate + phosphate + H(+). It participates in pyrimidine metabolism; UMP biosynthesis via de novo pathway; (S)-dihydroorotate from bicarbonate: step 2/3. Catalyzes the condensation of carbamoyl phosphate and aspartate to form carbamoyl aspartate and inorganic phosphate, the committed step in the de novo pyrimidine nucleotide biosynthesis pathway. The polypeptide is Aspartate carbamoyltransferase catalytic subunit (Yersinia enterocolitica serotype O:8 / biotype 1B (strain NCTC 13174 / 8081)).